The following is a 1257-amino-acid chain: Pesticidal crystal protein Cry12Aa (1257 aa).

It belongs to the delta endotoxin family.

In terms of biological role, endotoxin with nematicidal activity. The protein is Pesticidal crystal protein Cry12Aa (cry12Aa) of Bacillus thuringiensis.